The primary structure comprises 218 residues: Ropporin-1-like protein (218 aa).

The RIIa domain occupies 17–46 (PELTDILKQFTKAAIRTQPADVLQWSAGYF).

It belongs to the ropporin family. In terms of assembly, component of the axonemal radial spoke complex 1 (RS1), at least composed of spoke head proteins RSPH1, RSPH3, RSPH9 and the cilia-specific component RSPH4A or sperm-specific component RSPH6A, spoke stalk proteins RSPH14, DNAJB13, DYDC1, ROPN1L and NME5, and the anchor protein IQUB. May interact with AKAP3. Interacts with FSCB; the interaction increases upon spermatozoa capacitation conditions. Interacts with CFAP61. Sumoylated, sumoylation decreases upon spermatozoa capacitation conditions.

The protein localises to the cell projection. It localises to the cilium. The protein resides in the flagellum. Functionally, functions as part of axonemal radial spoke complexes that play an important part in the motility of sperm and cilia. Important for male fertility. With ROPN1, involved in fibrous sheath integrity and sperm motility, plays a role in PKA-dependent signaling processes required for spermatozoa capacitation. The sequence is that of Ropporin-1-like protein (ROPN1L) from Bos taurus (Bovine).